The primary structure comprises 83 residues: Cardiotoxin 7a (83 aa).

The N-terminal stretch at 1–21 (MKTLLLTLVVVTIVCLDLGYT) is a signal peptide. 4 disulfide bridges follow: C24-C43, C36-C61, C65-C76, and C77-C82.

This sequence belongs to the three-finger toxin family. Short-chain subfamily. Orphan group XV sub-subfamily. As to expression, expressed by the venom gland.

The protein localises to the secreted. The protein resides in the target cell membrane. Functionally, has low cytotoxic activity. The polypeptide is Cardiotoxin 7a (Naja atra (Chinese cobra)).